A 430-amino-acid chain; its full sequence is Asparagine--tRNA ligase (430 aa).

This sequence belongs to the class-II aminoacyl-tRNA synthetase family. In terms of assembly, homodimer.

It is found in the cytoplasm. It catalyses the reaction tRNA(Asn) + L-asparagine + ATP = L-asparaginyl-tRNA(Asn) + AMP + diphosphate + H(+). This chain is Asparagine--tRNA ligase, found in Oceanobacillus iheyensis (strain DSM 14371 / CIP 107618 / JCM 11309 / KCTC 3954 / HTE831).